The sequence spans 1048 residues: uncharacterized protein (1048 aa).

The tract at residues 601–629 is disordered; sequence ENQINEEQQTNVENEQQTEQQFENEDKET. A compositionally biased stretch (low complexity) spans 605–621; the sequence is NEEQQTNVENEQQTEQQ.

This is an uncharacterized protein from Methanocaldococcus jannaschii (strain ATCC 43067 / DSM 2661 / JAL-1 / JCM 10045 / NBRC 100440) (Methanococcus jannaschii).